The sequence spans 201 residues: MALHDENVVWHSHPVTPQQREQHHGHRGVVLWFTGLSGSGKSTVAGGLEEALHKLGVSTYLLDGDNVRHGLCSDLGFSDADRKENIRRVGEVANLMVEAGLVVLTAFISPHRAERQMVRERVGEGRFIEVFVDTPLAICEARDPKGLYKKARAGELRNFTGIDSVYEAPESAEIHLNGEQLVTNLVQQLLDLLRQNDIIRS.

Residues 1–23 are disordered; the sequence is MALHDENVVWHSHPVTPQQREQH. 35 to 42 is a binding site for ATP; it reads GLSGSGKS. Residue Ser-109 is the Phosphoserine intermediate of the active site.

This sequence belongs to the APS kinase family.

The enzyme catalyses adenosine 5'-phosphosulfate + ATP = 3'-phosphoadenylyl sulfate + ADP + H(+). It functions in the pathway sulfur metabolism; hydrogen sulfide biosynthesis; sulfite from sulfate: step 2/3. Catalyzes the synthesis of activated sulfate. This chain is Adenylyl-sulfate kinase, found in Escherichia coli O6:K15:H31 (strain 536 / UPEC).